Reading from the N-terminus, the 421-residue chain is Probable sugar-binding periplasmic protein (421 aa).

Residues Met-1–Ala-27 form the signal peptide.

It belongs to the bacterial solute-binding protein 1 family.

Its subcellular location is the periplasm. Functionally, part of a binding-protein-dependent transport system for a sugar. In Brucella melitensis biotype 1 (strain ATCC 23456 / CCUG 17765 / NCTC 10094 / 16M), this protein is Probable sugar-binding periplasmic protein.